Here is a 406-residue protein sequence, read N- to C-terminus: Putative nickel insertion protein (406 aa).

It belongs to the LarC family.

This Methanosphaera stadtmanae (strain ATCC 43021 / DSM 3091 / JCM 11832 / MCB-3) protein is Putative nickel insertion protein.